Here is a 251-residue protein sequence, read N- to C-terminus: 3-deoxy-manno-octulosonate cytidylyltransferase (251 aa).

The protein belongs to the KdsB family.

It is found in the cytoplasm. It catalyses the reaction 3-deoxy-alpha-D-manno-oct-2-ulosonate + CTP = CMP-3-deoxy-beta-D-manno-octulosonate + diphosphate. It participates in nucleotide-sugar biosynthesis; CMP-3-deoxy-D-manno-octulosonate biosynthesis; CMP-3-deoxy-D-manno-octulosonate from 3-deoxy-D-manno-octulosonate and CTP: step 1/1. Its pathway is bacterial outer membrane biogenesis; lipopolysaccharide biosynthesis. In terms of biological role, activates KDO (a required 8-carbon sugar) for incorporation into bacterial lipopolysaccharide in Gram-negative bacteria. The sequence is that of 3-deoxy-manno-octulosonate cytidylyltransferase from Brucella ovis (strain ATCC 25840 / 63/290 / NCTC 10512).